The following is a 483-amino-acid chain: Glycogen synthase (483 aa).

Lysine 18 contacts ADP-alpha-D-glucose.

This sequence belongs to the glycosyltransferase 1 family. Bacterial/plant glycogen synthase subfamily.

The enzyme catalyses [(1-&gt;4)-alpha-D-glucosyl](n) + ADP-alpha-D-glucose = [(1-&gt;4)-alpha-D-glucosyl](n+1) + ADP + H(+). It functions in the pathway glycan biosynthesis; glycogen biosynthesis. Its function is as follows. Synthesizes alpha-1,4-glucan chains using ADP-glucose. The sequence is that of Glycogen synthase from Rhodopseudomonas palustris (strain TIE-1).